Here is a 416-residue protein sequence, read N- to C-terminus: Esterase FrsA (416 aa).

The tract at residues 19–39 is disordered; that stretch reads ETSTLVRRTRHDQETQGLHST.

This sequence belongs to the FrsA family.

It carries out the reaction a carboxylic ester + H2O = an alcohol + a carboxylate + H(+). Catalyzes the hydrolysis of esters. The sequence is that of Esterase FrsA from Pectobacterium atrosepticum (strain SCRI 1043 / ATCC BAA-672) (Erwinia carotovora subsp. atroseptica).